A 466-amino-acid chain; its full sequence is Argininosuccinate lyase (466 aa).

Belongs to the lyase 1 family. Argininosuccinate lyase subfamily.

It localises to the cytoplasm. It carries out the reaction 2-(N(omega)-L-arginino)succinate = fumarate + L-arginine. It functions in the pathway amino-acid biosynthesis; L-arginine biosynthesis; L-arginine from L-ornithine and carbamoyl phosphate: step 3/3. The polypeptide is Argininosuccinate lyase (Campylobacter concisus (strain 13826)).